The chain runs to 501 residues: Aldehyde dehydrogenase, cytosolic 1 (501 aa).

Ser-2 is subject to N-acetylserine. An N6-acetyllysine mark is found at Lys-91 and Lys-128. 246-251 (GSTEVG) provides a ligand contact to NAD(+). Lys-252 is modified (N6-acetyllysine). Residue Glu-269 is the Proton acceptor of the active site. Catalysis depends on Cys-303, which acts as the Nucleophile. Residues Lys-353, Lys-367, and Lys-410 each carry the N6-acetyllysine modification. Residue Ser-413 is modified to Phosphoserine. Lys-419 and Lys-435 each carry N6-acetyllysine.

The protein belongs to the aldehyde dehydrogenase family. In terms of assembly, homotetramer. In terms of tissue distribution, highest level in liver, high level in lung, low level in kidney and testis.

Its subcellular location is the cytoplasm. The enzyme catalyses an aldehyde + NAD(+) + H2O = a carboxylate + NADH + 2 H(+). The protein operates within alcohol metabolism; ethanol degradation; acetate from ethanol: step 2/2. Can oxidize benzaldehyde, propionaldehyde and acetaldehyde. No detectable activity with retinal. This chain is Aldehyde dehydrogenase, cytosolic 1, found in Mus musculus (Mouse).